The following is an 834-amino-acid chain: Taste receptor type 1 member 2 (834 aa).

Positions 1-19 are cleaved as a signal peptide; sequence MGPRARTVCFLFFLLWVLA. Residues 20-561 are Extracellular-facing; sequence ELAENSDFHL…SFLEWHEAAT (542 aa). N-linked (GlcNAc...) asparagine glycosylation is found at N84, N292, N312, N363, N423, N482, and N522. A helical transmembrane segment spans residues 562–582; it reads IAVALLAALGFLXXXXXXXXX. Residues 583–597 lie on the Cytoplasmic side of the membrane; the sequence is XXXXXXPMVRSAGGP. Residues 598–618 traverse the membrane as a helical segment; that stretch reads MCFLMLTLLLVAYMVVPVYVG. Residues 619-630 are Extracellular-facing; it reads PPKVTTCLCRQA. A helical transmembrane segment spans residues 631 to 651; the sequence is LFPVCFTICISCITMRSFQIV. Over 652–676 the chain is Cytoplasmic; the sequence is CVFKMASRFPRAYSYWVRYQGSYVS. The helical transmembrane segment at 677 to 697 threads the bilayer; it reads VAFITALKVVTVVISLLATGL. Over 698–722 the chain is Extracellular; that stretch reads NPTTRADTDDPKIMIISCNPNYRNS. A helical membrane pass occupies residues 723 to 743; the sequence is LLFNTSLDLLLSVVGFSFAYM. Residues 744–755 are Cytoplasmic-facing; sequence GKELPTNYNEAK. A helical transmembrane segment spans residues 756–776; the sequence is FITFSMTFYFTSSVSLCTFMS. The Extracellular segment spans residues 777 to 779; sequence VYD. A helical transmembrane segment spans residues 780–800; sequence GVLVTIVDLLVTVFNLLAISL. Residues 801–834 lie on the Cytoplasmic side of the membrane; the sequence is GYFGPKCYMILFYPERNTPAYFNSMIQGYTMRRD.

This sequence belongs to the G-protein coupled receptor 3 family. TAS1R subfamily. As to quaternary structure, forms heterodimers with TAS1R3.

It localises to the cell membrane. Putative taste receptor. TAS1R2/TAS1R3 recognizes diverse natural and synthetic sweeteners. The protein is Taste receptor type 1 member 2 (TAS1R2) of Cebuella pygmaea (Pygmy marmoset).